The chain runs to 285 residues: Phosphatidate cytidylyltransferase (285 aa).

Transmembrane regions (helical) follow at residues 10–30, 56–76, 93–113, 121–141, 151–171, 190–210, 213–233, and 264–284; these read FVLI…GFAI, VWLA…LPEY, LGWW…AAIW, LIFG…LRAW, AIWL…AYMF, WQGF…YGMW, LDVA…ASVL, and IDSL…VFRT.

The protein belongs to the CDS family.

It localises to the cell inner membrane. It carries out the reaction a 1,2-diacyl-sn-glycero-3-phosphate + CTP + H(+) = a CDP-1,2-diacyl-sn-glycerol + diphosphate. It participates in phospholipid metabolism; CDP-diacylglycerol biosynthesis; CDP-diacylglycerol from sn-glycerol 3-phosphate: step 3/3. The protein is Phosphatidate cytidylyltransferase (cdsA) of Escherichia coli O157:H7.